The sequence spans 364 residues: Aminomethyltransferase (364 aa).

The protein belongs to the GcvT family. The glycine cleavage system is composed of four proteins: P, T, L and H.

The catalysed reaction is N(6)-[(R)-S(8)-aminomethyldihydrolipoyl]-L-lysyl-[protein] + (6S)-5,6,7,8-tetrahydrofolate = N(6)-[(R)-dihydrolipoyl]-L-lysyl-[protein] + (6R)-5,10-methylene-5,6,7,8-tetrahydrofolate + NH4(+). In terms of biological role, the glycine cleavage system catalyzes the degradation of glycine. This Escherichia coli (strain SMS-3-5 / SECEC) protein is Aminomethyltransferase.